The chain runs to 338 residues: Large ribosomal subunit protein uL10 (338 aa).

The interval 298 to 338 (TVQQSQSQQPAAEEKKEEKKEEEKKGPSEEEIASGLASLFG) is disordered. Positions 309–325 (AEEKKEEKKEEEKKGPS) are enriched in basic and acidic residues.

This sequence belongs to the universal ribosomal protein uL10 family. In terms of assembly, part of the 50S ribosomal subunit. Forms part of the ribosomal stalk which helps the ribosome interact with GTP-bound translation factors. Forms a heptameric L10(L12)2(L12)2(L12)2 complex, where L10 forms an elongated spine to which the L12 dimers bind in a sequential fashion.

Forms part of the ribosomal stalk, playing a central role in the interaction of the ribosome with GTP-bound translation factors. The protein is Large ribosomal subunit protein uL10 of Saccharolobus solfataricus (strain ATCC 35092 / DSM 1617 / JCM 11322 / P2) (Sulfolobus solfataricus).